A 514-amino-acid chain; its full sequence is tRNA-2-methylthio-N(6)-dimethylallyladenosine synthase (514 aa).

Residues 1–21 (MNEEQRKASSVDVLAERDKKA) are disordered. Positions 68–186 (RTFLIKTYGC…LPEILEEAYL (119 aa)) constitute an MTTase N-terminal domain. [4Fe-4S] cluster contacts are provided by Cys-77, Cys-113, Cys-147, Cys-223, Cys-227, and Cys-230. The Radical SAM core domain maps to 209–440 (REGNIKAWVN…KKVGHYSQIA (232 aa)). The TRAM domain maps to 442 to 505 (SKYEGQTVTV…QYSLNGSFIK (64 aa)).

This sequence belongs to the methylthiotransferase family. MiaB subfamily. As to quaternary structure, monomer. [4Fe-4S] cluster serves as cofactor.

The protein resides in the cytoplasm. The enzyme catalyses N(6)-dimethylallyladenosine(37) in tRNA + (sulfur carrier)-SH + AH2 + 2 S-adenosyl-L-methionine = 2-methylsulfanyl-N(6)-dimethylallyladenosine(37) in tRNA + (sulfur carrier)-H + 5'-deoxyadenosine + L-methionine + A + S-adenosyl-L-homocysteine + 2 H(+). Functionally, catalyzes the methylthiolation of N6-(dimethylallyl)adenosine (i(6)A), leading to the formation of 2-methylthio-N6-(dimethylallyl)adenosine (ms(2)i(6)A) at position 37 in tRNAs that read codons beginning with uridine. The protein is tRNA-2-methylthio-N(6)-dimethylallyladenosine synthase of Staphylococcus aureus (strain USA300 / TCH1516).